Reading from the N-terminus, the 555-residue chain is CTP synthase (555 aa).

Residues 1–265 form an amidoligase domain region; that stretch reads MTRYIFITGG…GNRVCEKLNI (265 aa). Ser13 provides a ligand contact to CTP. Ser13 serves as a coordination point for UTP. ATP-binding positions include 14 to 19 and Asp71; that span reads SLGKGI. Mg(2+)-binding residues include Asp71 and Glu139. CTP-binding positions include 146-148, 186-191, and Lys222; these read DIE and KTKPTQ. Residues 186 to 191 and Lys222 contribute to the UTP site; that span reads KTKPTQ. A Glutamine amidotransferase type-1 domain is found at 290-541; that stretch reads TVAVVGKYVD…IKAGLAAKEA (252 aa). Gly351 contributes to the L-glutamine binding site. Catalysis depends on Cys378, which acts as the Nucleophile; for glutamine hydrolysis. L-glutamine-binding positions include 379 to 382, Glu402, and Arg469; that span reads LGMQ. Catalysis depends on residues His514 and Glu516.

The protein belongs to the CTP synthase family. In terms of assembly, homotetramer.

It carries out the reaction UTP + L-glutamine + ATP + H2O = CTP + L-glutamate + ADP + phosphate + 2 H(+). The catalysed reaction is L-glutamine + H2O = L-glutamate + NH4(+). It catalyses the reaction UTP + NH4(+) + ATP = CTP + ADP + phosphate + 2 H(+). The protein operates within pyrimidine metabolism; CTP biosynthesis via de novo pathway; CTP from UDP: step 2/2. Allosterically activated by GTP, when glutamine is the substrate; GTP has no effect on the reaction when ammonia is the substrate. The allosteric effector GTP functions by stabilizing the protein conformation that binds the tetrahedral intermediate(s) formed during glutamine hydrolysis. Inhibited by the product CTP, via allosteric rather than competitive inhibition. In terms of biological role, catalyzes the ATP-dependent amination of UTP to CTP with either L-glutamine or ammonia as the source of nitrogen. Regulates intracellular CTP levels through interactions with the four ribonucleotide triphosphates. The sequence is that of CTP synthase from Coxiella burnetii (strain RSA 493 / Nine Mile phase I).